Reading from the N-terminus, the 952-residue chain is Protein translocase subunit SecA (952 aa).

ATP contacts are provided by residues glutamine 104, 122 to 126, and aspartate 512; that span reads GEGKT.

The protein belongs to the SecA family. Monomer and homodimer. Part of the essential Sec protein translocation apparatus which comprises SecA, SecYEG and auxiliary proteins SecDF. Other proteins may also be involved.

Its subcellular location is the cell inner membrane. It localises to the cytoplasm. It carries out the reaction ATP + H2O + cellular proteinSide 1 = ADP + phosphate + cellular proteinSide 2.. Part of the Sec protein translocase complex. Interacts with the SecYEG preprotein conducting channel. Has a central role in coupling the hydrolysis of ATP to the transfer of proteins into and across the cell membrane, serving as an ATP-driven molecular motor driving the stepwise translocation of polypeptide chains across the membrane. The polypeptide is Protein translocase subunit SecA (Gloeobacter violaceus (strain ATCC 29082 / PCC 7421)).